A 432-amino-acid chain; its full sequence is Amino-acid acetyltransferase (432 aa).

Positions 286–425 (EVVREASIED…ASLYNYQRNS (140 aa)) constitute an N-acetyltransferase domain.

This sequence belongs to the acetyltransferase family. ArgA subfamily.

It is found in the cytoplasm. It catalyses the reaction L-glutamate + acetyl-CoA = N-acetyl-L-glutamate + CoA + H(+). It functions in the pathway amino-acid biosynthesis; L-arginine biosynthesis; N(2)-acetyl-L-ornithine from L-glutamate: step 1/4. The protein is Amino-acid acetyltransferase of Pseudomonas putida (strain GB-1).